The sequence spans 341 residues: Queuosine 5'-phosphate N-glycosylase/hydrolase (341 aa).

Met1 bears the N-acetylmethionine mark. 6 residues coordinate queuine: His53, Phe237, Asp239, Asp314, Tyr315, and Asp319. Asp239 functions as the Nucleophile or transition state stabilizer in the catalytic mechanism.

The protein belongs to the QNG1 protein family.

The catalysed reaction is queuosine 5'-phosphate + H2O = queuine + D-ribose 5-phosphate. Catalyzes the hydrolysis of queuosine 5'-phosphate, releasing the nucleobase queuine (q). Is required for salvage of queuine from exogenous queuosine (Q) that is imported and then converted to queuosine 5'-phosphate intracellularly. The polypeptide is Queuosine 5'-phosphate N-glycosylase/hydrolase (Bos taurus (Bovine)).